Here is a 297-residue protein sequence, read N- to C-terminus: uncharacterized protein (297 aa).

The next 2 helical transmembrane spans lie at 17–37 and 48–68; these read LALSGGGFYGFAVVGALKEIF and TISGVSVGSIIATMLAIGYSI. The PNPLA domain maps to 17 to 196; the sequence is LALSGGGFYG…TLNYPITLFD (180 aa). A GXGXXG motif is present at residues 21–26; sequence GGGFYG. The GXSXG signature appears at 51–55; sequence GVSVG. Residue serine 53 is the Nucleophile of the active site. An N-linked (GlcNAc...) asparagine; by host glycan is attached at asparagine 122. The Proton acceptor role is filled by aspartate 183. The DGA/G motif lies at 183-185; it reads DGG. Asparagine 239 carries an N-linked (GlcNAc...) asparagine; by host glycan.

It is found in the membrane. Its function is as follows. Probable lipid hydrolase. This is an uncharacterized protein from Acanthamoeba polyphaga mimivirus (APMV).